A 510-amino-acid chain; its full sequence is Chromosomal replication initiator protein DnaA (510 aa).

The interval 1–107 is domain I, interacts with DnaA modulators; that stretch reads MTNDPGSGFA…VRIAPPPADD (107 aa). The segment at 107–169 is domain II; sequence DDDDSVAAAV…ADTSASADGT (63 aa). Residues 119–168 form a disordered region; the sequence is PGLEASPETSQEVSDEIDDFGENAPKSRQSWPTHFKKRSTDADTSASADG. The domain III, AAA+ region stretch occupies residues 170-386; sequence SLNRRYTFDT…GALIRVTAFA (217 aa). ATP-binding residues include Gly214, Gly216, Lys217, and Thr218. Positions 387 to 510 are domain IV, binds dsDNA; it reads SLNKTPIDKA…TTRIRQRSKR (124 aa).

It belongs to the DnaA family. Oligomerizes as a right-handed, spiral filament on DNA at oriC.

Its subcellular location is the cytoplasm. Its function is as follows. Plays an essential role in the initiation and regulation of chromosomal replication. ATP-DnaA binds to the origin of replication (oriC) to initiate formation of the DNA replication initiation complex once per cell cycle. Binds the DnaA box (a 9 base pair repeat at the origin) and separates the double-stranded (ds)DNA. Forms a right-handed helical filament on oriC DNA; dsDNA binds to the exterior of the filament while single-stranded (ss)DNA is stabiized in the filament's interior. The ATP-DnaA-oriC complex binds and stabilizes one strand of the AT-rich DNA unwinding element (DUE), permitting loading of DNA polymerase. After initiation quickly degrades to an ADP-DnaA complex that is not apt for DNA replication. Binds acidic phospholipids. This chain is Chromosomal replication initiator protein DnaA, found in Mycobacterium ulcerans (strain Agy99).